Reading from the N-terminus, the 675-residue chain is Methionine--tRNA ligase (675 aa).

The 'HIGH' region signature appears at Pro-15–His-25. Zn(2+) contacts are provided by Cys-146, Cys-149, Cys-159, and Cys-162. The 'KMSKS' region motif lies at Lys-332–Ser-336. Residue Lys-335 coordinates ATP. The 103-residue stretch at Asp-573–Lys-675 folds into the tRNA-binding domain.

The protein belongs to the class-I aminoacyl-tRNA synthetase family. MetG type 1 subfamily. In terms of assembly, homodimer. It depends on Zn(2+) as a cofactor.

The protein resides in the cytoplasm. The catalysed reaction is tRNA(Met) + L-methionine + ATP = L-methionyl-tRNA(Met) + AMP + diphosphate. Its function is as follows. Is required not only for elongation of protein synthesis but also for the initiation of all mRNA translation through initiator tRNA(fMet) aminoacylation. The polypeptide is Methionine--tRNA ligase (Yersinia pseudotuberculosis serotype IB (strain PB1/+)).